A 2126-amino-acid chain; its full sequence is Serine/threonine-protein kinase WNK1 (2126 aa).

Disordered stretches follow at residues 1–80 and 93–202; these read MSDG…FFRR and LPGL…QQQD. Ser-17 carries the post-translational modification Phosphoserine. Residues 48–64 are compositionally biased toward basic and acidic residues; the sequence is RTEEYRRRRHTMDKDSR. The residue at position 58 (Thr-58) is a Phosphothreonine. Low complexity-rich tracts occupy residues 101–111 and 127–141; these read PQPSVPAVVPQ and VASQ…AASP. Residues Ser-165 and Ser-172 each carry the phosphoserine modification. Residues 221 to 479 form the Protein kinase domain; sequence LKFDIEIGRG…IKDLLNHAFF (259 aa). Ser-231 provides a ligand contact to ATP. Chloride contacts are provided by Phe-283 and Leu-299. Residues 301–304 and Lys-351 each bind ATP; that span reads TELM. The Proton acceptor role is filled by Asp-368. Leu-369 and Leu-371 together coordinate chloride. Phosphoserine; by autocatalysis is present on residues Ser-378 and Ser-382. Positions 488–555 are autoinhibitory domain; the sequence is ELAEEDDGEK…VCEGDHKTMA (68 aa). Residues 573–588 show a composition bias toward basic and acidic residues; it reads QLVREEQEKRKQEESS. Positions 573–865 are disordered; sequence QLVREEQEKR…SRHEKTSRPK (293 aa). Polar residues predominate over residues 593-614; it reads NEQQASVSQAGIQPLSVASTGI. Residues 615–626 show a composition bias toward low complexity; the sequence is PTAPTTSASVST. Residues 629-639 are interaction with KLHL3; the sequence is EPEEPEADQHQ. Polar residues-rich tracts occupy residues 638 to 682, 695 to 705, and 713 to 733; these read HQQL…GSQH, TVSSIQAQSQP, and SMAQ…VLSS. A compositionally biased stretch (low complexity) spans 734 to 746; sequence QPVQHPQQQGIQP. The segment covering 750–789 has biased composition (polar residues); the sequence is PQQAVQYSLPQAASSSEGTVQPVSQPQVSAGTQSSTQGVS. Positions 793-823 are enriched in low complexity; sequence PPEQTPITQSQPTQPVPLVSSVDSAHSDVAS. Polar residues predominate over residues 826–836; sequence SDGNENAPSSS. A compositionally biased stretch (basic residues) spans 844-865; that stretch reads TKRHYRKSVRSRSRHEKTSRPK. The short motif at 1003–1006 is the RFXV motif 1 element; the sequence is RFIV. Ser-1007 is modified (phosphoserine). 2 disordered regions span residues 1474 to 1507 and 1557 to 1595; these read GQVS…LTKT and IPVT…ASSS. Low complexity predominate over residues 1477 to 1496; it reads STPGTHASAPASTATGAKPG. Residues 1567 to 1583 are compositionally biased toward polar residues; sequence STMSSTAVTEAGSQPQK. An RFXV motif 2 motif is present at residues 1604 to 1607; that stretch reads RFQV. The disordered stretch occupies residues 1610–1695; the sequence is TMDDAQKERK…TKVGRFQVTT (86 aa). A compositionally biased stretch (basic and acidic residues) spans 1613–1629; sequence DAQKERKNRSEDTKSVH. Residues 1632-1650 are compositionally biased toward low complexity; the sequence is SSTSESSVLSSSSPESTLV. Short sequence motifs (RFXV motif) lie at residues 1690–1693 and 1702–1705; these read RFQV and RFSV. The span at 1709–1719 shows a compositional bias: basic and acidic residues; that stretch reads EDKVTELKKEG. Disordered regions lie at residues 1709-1783, 1856-1940, and 1952-1990; these read EDKV…LCSK, VIIP…NLYS, and SLSA…KGTF. Ser-1723 carries the phosphoserine modification. Basic and acidic residues predominate over residues 1738-1747; it reads PKKEKPELAE. Residues Ser-1755, Ser-1756, Ser-1771, Ser-1773, Ser-1776, and Ser-1865 each carry the phosphoserine modification. The segment covering 1866 to 1878 has biased composition (basic residues); sequence GRRRRPTKSKGSK. Residues 1879-1889 show a composition bias toward low complexity; it reads SSRSSSLGNKS. A compositionally biased stretch (polar residues) spans 1890–1940; the sequence is PQLSGNLSGQSGTSVLNPQQTLHPPGNTPETGHNQLLQPLKPSPSSDNLYS. Residues 1957–1981 show a composition bias toward low complexity; sequence GQGTSSTNTVGGTVSSQAAQAQPPA. Residues 1985–2005 form an amphipathic alpha-helix region; sequence SRKGTFTDDLHKLVDNWARDA. Phosphoserine is present on residues Ser-2014 and Ser-2030. A disordered region spans residues 2076–2097; the sequence is PFGTQWSGTGGPAPQPLGQFQP. Ser-2114 and Ser-2116 each carry phosphoserine.

It belongs to the protein kinase superfamily. Ser/Thr protein kinase family. WNK subfamily. As to quaternary structure, interacts with WNK3. Interacts with WNK4; inhibiting the activity of WNK4. Interacts with SGK1; promoting its activation. Associates with the mTORC2 complex. Interacts with UVRAG. Interacts (via amphipathic alpha-helix region) with EMC2; promoting the ER membrane protein complex assembly. In terms of assembly, interacts with isoform 1; inhibiting isoform 1 activity. Requires Mg(2+) as cofactor. Autophosphorylated at Ser-378 and Ser-382, promoting its activity. Autophosphorylation at Ser-382 is inhibited by intracellular calcium. Phosphorylation at Thr-58 increases ability to activate SGK1. Post-translationally, ubiquitinated by the BCR(KLHL3) complex, leading to its degradation. Also ubiquitinated by the BCR(KLHL2) complex. In terms of processing, may be O-glycosylated.

Its subcellular location is the cytoplasm. The protein resides in the nucleus. It localises to the cytoskeleton. It is found in the spindle. The enzyme catalyses L-seryl-[protein] + ATP = O-phospho-L-seryl-[protein] + ADP + H(+). It carries out the reaction L-threonyl-[protein] + ATP = O-phospho-L-threonyl-[protein] + ADP + H(+). Its activity is regulated as follows. Activated in response to hyperosmotic stress: cell shrinkage promotes formation of a membraneless compartment that concentrates WNK1 with its substrates, OXSR1/OSR1 and STK39/SPAK. Activation requires autophosphorylation of Ser-382 and, to a lower extent, Ser-378. Autophosphorylation and subsequent activation is inhibited by increases in intracellular ionic strength: Cl(-) potently inhibits WNK1 kinase activity via direct binding. Also inhibited by K(+) ions. Inhibited by Compound 12 ((5-Chloro-2-(2-((methyl-d3)amino)thiazol-4-yl)- pyridin-4-yl)(4-(4-chlorobenzyl)piperazin-1-yl)methanone). Serine/threonine-protein kinase component of the WNK1-SPAK/OSR1 kinase cascade, which acts as a key regulator of blood pressure and regulatory volume increase by promoting ion influx. WNK1 mediates regulatory volume increase in response to hyperosmotic stress by acting as a molecular crowding sensor, which senses cell shrinkage and mediates formation of a membraneless compartment by undergoing liquid-liquid phase separation. The membraneless compartment concentrates WNK1 with its substrates, OXSR1/OSR1 and STK39/SPAK, promoting WNK1-dependent phosphorylation and activation of downstream kinases OXSR1/OSR1 and STK39/SPAK. Following activation, OXSR1/OSR1 and STK39/SPAK catalyze phosphorylation of ion cotransporters SLC12A1/NKCC2, SLC12A2/NKCC1, SLC12A5/KCC2 and SLC12A6/KCC3, regulating their activity. Phosphorylation of Na-K-Cl cotransporters SLC12A2/NKCC1 and SLC12A2/NKCC1 promote their activation and ion influx; simultaneously, phosphorylation of K-Cl cotransporters SLC12A5/KCC2 and SLC12A6/KCC3 inhibit their activity, blocking ion efflux. Also acts as a regulator of angiogenesis in endothelial cells. Also acts independently of the WNK1-SPAK/OSR1 kinase cascade by catalyzing phosphorylation of other substrates, such as SYT2, PCF11 and NEDD4L. Mediates phosphorylation of SYT2, regulating SYT2 association with phospholipids and membrane-binding. Regulates mRNA export in the nucleus by mediating phosphorylation of PCF11, thereby decreasing the association between PCF11 and POLR2A/RNA polymerase II and promoting mRNA export to the cytoplasm. Acts as a negative regulator of autophagy. Required for the abscission step during mitosis, independently of the WNK1-SPAK/OSR1 kinase cascade. WNK1 may also play a role in actin cytoskeletal reorganization. Also acts as a scaffold protein independently of its protein kinase activity: negatively regulates cell membrane localization of various transporters and channels, such as SLC4A4, SLC26A6, SLC26A9, TRPV4 and CFTR. Involved in the regulation of epithelial Na(+) channel (ENaC) by promoting activation of SGK1 in a kinase-independent manner. Probably activates SGK1 by acting as a scaffold protein that promotes the recruitment of SGK1 to the mTORC2 complex in response to chloride, leading to mTORC2-dependent phosphorylation and activation of SGK1. Acts as an assembly factor for the ER membrane protein complex independently of its protein kinase activity: associates with EMC2 in the cytoplasm via its amphipathic alpha-helix, and prevents EMC2 ubiquitination and subsequent degradation, thereby promoting EMC2 stabilization. Its function is as follows. Kinase-defective isoform specifically expressed in kidney, which acts as a dominant-negative regulator of the longer isoform 1. Does not directly inhibit WNK4 and has no direct effect on sodium and chloride ion transport. Down-regulates sodium-chloride cotransporter activity indirectly by inhibiting isoform 1, it associates with isoform 1 and attenuates its kinase activity. In kidney, may play an important role regulating sodium and potassium balance. In terms of biological role, kinase-defective isoform produced by alternative promoter usage and alternative splicing. The sequence is that of Serine/threonine-protein kinase WNK1 from Rattus norvegicus (Rat).